The primary structure comprises 283 residues: 2-dehydro-3-deoxyphosphooctonate aldolase (283 aa).

Belongs to the KdsA family.

It localises to the cytoplasm. It carries out the reaction D-arabinose 5-phosphate + phosphoenolpyruvate + H2O = 3-deoxy-alpha-D-manno-2-octulosonate-8-phosphate + phosphate. Its pathway is carbohydrate biosynthesis; 3-deoxy-D-manno-octulosonate biosynthesis; 3-deoxy-D-manno-octulosonate from D-ribulose 5-phosphate: step 2/3. It participates in bacterial outer membrane biogenesis; lipopolysaccharide biosynthesis. The protein is 2-dehydro-3-deoxyphosphooctonate aldolase of Parasynechococcus marenigrum (strain WH8102).